The chain runs to 367 residues: MAAAGAGSGRAAVSRSRPPPARFRGCLAGALLGDCLGAVFEGRSVVKLPDLLSFLRGLEPPGGEGEPAGSARRETLSYTDDTAMSRCVVQSLLAKREFDEVDMAKRFAEEYKKEPNRGYGMAVVNVFKKLLSPQCSDVFEPARAQFNGKGSYGNGGAMRVAGIPLTYSDVQDVKKFAKLSAELTHANSLGYNGAILQALAVHLALQGEVSRETFLEQLISHMEDIEADDKSLTDARALGFEDLPFSRRLKKIKEFLELSSVPKEDVLFELGNGIAALRSVPTAIYSFLRCMEADPDIPEHYNNLQRTIIYCISLGGDTNTIATMAGAIAGAYYGEEQVPPSWEQSCEAFQETQKMANSLHELYCQQL.

Positions 41, 79, 80, and 81 each coordinate Mg(2+). Asp80 is a substrate binding site. Substrate contacts are provided by residues 149-155 (KGSYGNG), His185, Leu238, and Ile274. Asp317 and Thr320 together coordinate Mg(2+).

The protein belongs to the ADP-ribosylglycohydrolase family. Monomer. The cofactor is Mg(2+).

The protein resides in the nucleus. Its subcellular location is the cytoplasm. It localises to the chromosome. It is found in the mitochondrion matrix. It catalyses the reaction [(1''-&gt;2')-ADP-alpha-D-ribose](n) + H2O = [(1''-&gt;2')-ADP-alpha-D-ribose](n-1) + ADP-D-ribose. It carries out the reaction 1''-O-acetyl-ADP-alpha-D-ribose + H2O = ADP-D-ribose + acetate + H(+). The catalysed reaction is O-(ADP-D-ribosyl)-L-seryl-[protein] + H2O = ADP-D-ribose + L-seryl-[protein]. The enzyme catalyses alpha-NAD(+) + H2O = ADP-D-ribose + nicotinamide + H(+). The protein undergoes a dramatic conformational switch from closed to open states upon substrate-binding, which enables specific substrate recognition for the 1''-O-linkage. The glutamate flap (Glu-41) blocks substrate entrance to Mg(2+) in the unliganded closed state. In presence of substrate, Glu-41 is ejected from the active site: this closed-to-open transition significantly widens the substrate-binding channel and precisely positions the scissile 1''-O-linkage for cleavage while securing tightly 2'- and 3'-hydroxyls of ADP-ribose. ADP-ribosylhydrolase that preferentially hydrolyzes the scissile alpha-O-linkage attached to the anomeric C1'' position of ADP-ribose and acts on different substrates, such as proteins ADP-ribosylated on serine and threonine, free poly(ADP-ribose) and O-acetyl-ADP-D-ribose. Specifically acts as a serine mono-ADP-ribosylhydrolase by mediating the removal of mono-ADP-ribose attached to serine residues on proteins, thereby playing a key role in DNA damage response. Serine ADP-ribosylation of proteins constitutes the primary form of ADP-ribosylation of proteins in response to DNA damage. Does not hydrolyze ADP-ribosyl-arginine, -cysteine, -diphthamide, or -asparagine bonds. Also able to degrade protein free poly(ADP-ribose), which is synthesized in response to DNA damage: free poly(ADP-ribose) acts as a potent cell death signal and its degradation by ADPRHL2 protects cells from poly(ADP-ribose)-dependent cell death, a process named parthanatos. Also hydrolyzes free poly(ADP-ribose) in mitochondria. Specifically digests O-acetyl-ADP-D-ribose, a product of deacetylation reactions catalyzed by sirtuins. Specifically degrades 1''-O-acetyl-ADP-D-ribose isomer, rather than 2''-O-acetyl-ADP-D-ribose or 3''-O-acetyl-ADP-D-ribose isomers. The sequence is that of ADP-ribosylhydrolase ARH3 (ADPRS) from Gallus gallus (Chicken).